The primary structure comprises 249 residues: Low affinity immunoglobulin gamma Fc region receptor III-A (249 aa).

The signal sequence occupies residues 1-20; the sequence is MWQLLLPTALVLTAFSGIQA. At 21-203 the chain is on the extracellular side; it reads GLQKAVVNLD…SPSMFPPWHQ (183 aa). Ig-like C2-type domains follow at residues 22–102 and 119–188; these read LQKA…VQLE and EGDP…FRIS. Intrachain disulfides connect Cys-46–Cys-88 and Cys-127–Cys-171. 3 N-linked (GlcNAc...) asparagine glycosylation sites follow: Asn-62, Asn-164, and Asn-179. Residues 204–224 form a helical membrane-spanning segment; the sequence is ITFCLLIGLLFAIDTVLYFSV. Topologically, residues 225 to 249 are cytoplasmic; that stretch reads RRGLQSPVADYEEPKIQWSKEPQDK. The residue at position 235 (Tyr-235) is a Phosphotyrosine.

As to quaternary structure, forms a heterooligomeric complex with ITAM-containing signaling subunits FCER1G. Interacts (via transmembrane domain) with signaling subunits; this interaction is a prerequisite for receptor complex expression on the cell surface and intracellular signal transduction. Binds the Fc region of antigen-complexed IgG. N-glycosylated. Post-translationally, phosphorylated following receptor ligation. Detected on myeloid cells, peripheral blood monocytes, splenic and bone marrow dendritic cells, and thioglycollate-elicited macrophages and neutrophils but absent from lymphoid populations with no expression observed on T cells, B cells, NK cells or other granulocytes (at protein level). Expressed in peripheral blood leukocytes, spleen, liver, thymus and small intestine. Expressed in splenic dendritic cell subsets (at protein level).

The protein localises to the cell membrane. Its function is as follows. Receptor for the invariable Fc fragment of immunoglobulin gamma (IgG). Binds with intermediate affinity to both IgG2a and IgG2b. Can bind to IgG2a and IgG2b monomers. Does not display binding to IgG1 or IgG3. Recognizes neutralizing virus-specific IgGs displayed on the cell surface of infected cells and triggers antibody-dependent cellular cytotoxicity (ADCC). Confers protection to lethal influenza virus infection. On splenic dendritic cells, uptakes antigen immune complexes and efficiently divert them into MHC class I and II antigen presentation pathways to provide for superior priming of CD4-positive and CD8-positive T cell immune responses. Mediates neutrophil activation by IgG complexes redundantly with FCGR2A. Plays a role in promoting bone resorption by enhancing osteoclast differentiation following binding to IgG2a. Also acts as a receptor for the Fc region of immunoglobulin epsilon (IgE). Binds with low affinity to both the a and b allotypes of IgE. Has also been shown to bind to IgE allotype a only but not to allotype b. Binds aggregated IgE but not the monomeric form and bound monomeric IgG is readily displaced by IgE complexes. Binding to IgE promotes macrophage-mediated phagocytosis, antigen presentation to T cells, production of pro-inflammatory cytokines and the late phase of cutaneous allergic reactions. Mediates enhanced ADCC in response to afucosylated IgGs. This Mus musculus (Mouse) protein is Low affinity immunoglobulin gamma Fc region receptor III-A.